Reading from the N-terminus, the 431-residue chain is Divalent metal cation transporter MntH (431 aa).

12 helical membrane-spanning segments follow: residues 30 to 50 (WSWT…IDPG), 63 to 83 (GYTL…IQTL), 106 to 126 (PLVW…DLAE), 137 to 159 (LFGL…ALHL), 169 to 189 (ILIG…LVLS), 209 to 229 (YALY…VIYL), 257 to 277 (VILG…MAAA), 287 to 307 (VATI…VTAS), 309 to 329 (VFGL…TLSG), 341 to 361 (IPLW…IMLG), 367 to 387 (ALVA…VPLL), and 405 to 425 (VTGV…YVLF).

This sequence belongs to the NRAMP family.

The protein resides in the cell inner membrane. In terms of biological role, h(+)-stimulated, divalent metal cation uptake system. The chain is Divalent metal cation transporter MntH from Chromohalobacter salexigens (strain ATCC BAA-138 / DSM 3043 / CIP 106854 / NCIMB 13768 / 1H11).